Here is a 791-residue protein sequence, read N- to C-terminus: MKSNQERSNECLPPKKREIPATSRPSEEKATALPSDNHCVEGVAWLPSTPGIRGHGGGRHGSAGTSGEHGLQGMGLHKALSAGLDYSPPSAPRSVPTANTLPTVYPPPQSGTPVSPVQYAHLSHTFQFIGSSQYSGPYAGFIPSQLISPSGNPVTSAVASAAGATTPSQRSQLEAYSTLLANMGSLSQAPGHKVEPPPQQHLSRAAGLVNPGSPPPPTQQNQYIHISSSPQSSGRATSPPPIPVHLHPHQTMIPHTLTLGPSSQVVVQYSDAGGHFVPRESTKKAESSRLQQAMQAKEVLNGEMEKSRRYGASSSVELSLGKASSKSVPHPYESRHVVVHPSPADYSSRDTSGVRGSVMVLPNSSTPSADLEAQQTTHREASPSTLNDKSGLHLGKPGHRSYALSPHTVIQTTHSASEPLPVGLPATAFYAGTQPPVIGYLSGQQQAITYAGGLPQHLVIPGNQPLLIPVGSPDMDTPGAASAIVTSSPQFAAVPHTFVTTALPKSENFNPEALVTQAAYPAMVQAQIHLPVVQSVASPTTASPTLPPYFMKGSIIQLANGELKKVEDLKTEDFIQSAEISNDLKIDSSTVERIEESHSPGVAVIQFAVGEHRAQVSVEVLVEYPFFVFGQGWSSCCPERTSQLFDLPCSKLSVGDVCISLTLKNLKNGSVKKGQPVDPASVLLKQAKTDSLAGSRHRYAEQENGINQGSAQVLSENGELKFPEKIGLPAAPFLSKIEPSKPTATRKRRWSAPETRKLEKSEDEPPLTLPKPSLIPQEVKICIEGRSNVGK.

The span at Met-1–Ala-30 shows a compositional bias: basic and acidic residues. Residues Met-1–Asp-36 are disordered. Lys-16 participates in a covalent cross-link: Glycyl lysine isopeptide (Lys-Gly) (interchain with G-Cter in SUMO). Phosphoserine occurs at positions 81 and 87. 2 disordered regions span residues Ser-187–Pro-240 and Glu-298–Tyr-402. Residue Lys-193 forms a Glycyl lysine isopeptide (Lys-Gly) (interchain with G-Cter in SUMO) linkage. A Phosphoserine modification is found at Ser-213. The residue at position 218 (Thr-218) is a Phosphothreonine. Polar residues-rich tracts occupy residues Gln-219–Ala-236, Ala-312–Ser-327, and Pro-362–Asp-388. Ser-229 carries the phosphoserine modification. The tract at residues Val-470–Ile-580 is self-association. An interaction with USP7 region spans residues Leu-514–Lys-791. The RNA-binding stretch occupies residues Thr-516–Pro-742. An AXH domain is found at Ser-538–Gly-669. Glycyl lysine isopeptide (Lys-Gly) (interchain with G-Cter in SUMO) cross-links involve residues Lys-585, Lys-672, and Lys-721. Residues Lys-736–Leu-774 are disordered. Phosphoserine is present on Ser-751. Residues Pro-770 to Ser-773 carry the Nuclear localization signal motif.

The protein belongs to the ATXN1 family. As to quaternary structure, homooligomer. Interacts with PQBP1, UBQLN4 and USP7. Interacts with ANP32A. Interacts with CIC. Directly interacts with RBPJ; this interaction is disrupted in the presence of Notch intracellular domain. Interacts with ATXN1L; competes with ATXN1L for RBPJ-binding. Found in a complex with CIC and ATXN1L. In terms of processing, ubiquitinated by UBE3A, leading to its degradation by the proteasome. The presence of poly-Gln repeats in trangenic models developed to replicate phenotypes of the spinocerebellar ataxia 1 disease (SCA1) impair ubiquitination and degradation, leading to accumulation of Atxn1 in neurons and subsequent toxicity. Sumoylation is dependent on nuclear localization and phosphorylation at Ser-751. In terms of tissue distribution, expressed in the cortex and hypothalamus (at protein level). Widely expressed. In brain, the pattern of distribution is limited to neuron populations.

It localises to the cytoplasm. The protein resides in the nucleus. Its function is as follows. Chromatin-binding factor that repress Notch signaling in the absence of Notch intracellular domain by acting as a CBF1 corepressor. Binds to the HEY promoter and might assist, along with NCOR2, RBPJ-mediated repression. May be involved in RNA metabolism. In concert with CIC and ATXN1L, involved in brain development. This is Ataxin-1 (Atxn1) from Mus musculus (Mouse).